Consider the following 262-residue polypeptide: Polyamine aminopropyltransferase (262 aa).

The PABS domain maps to 1–249 (MWITQEITPY…DIHRAAFALP (249 aa)). S-methyl-5'-thioadenosine is bound at residue Asn-29. Position 83 (Asp-83) interacts with spermidine. Asp-155 functions as the Proton acceptor in the catalytic mechanism.

This sequence belongs to the spermidine/spermine synthase family. Homodimer or homotetramer.

Its subcellular location is the cytoplasm. The catalysed reaction is S-adenosyl 3-(methylsulfanyl)propylamine + putrescine = S-methyl-5'-thioadenosine + spermidine + H(+). The protein operates within amine and polyamine biosynthesis; spermidine biosynthesis; spermidine from putrescine: step 1/1. Catalyzes the irreversible transfer of a propylamine group from the amino donor S-adenosylmethioninamine (decarboxy-AdoMet) to putrescine (1,4-diaminobutane) to yield spermidine. The chain is Polyamine aminopropyltransferase from Helicobacter acinonychis (strain Sheeba).